We begin with the raw amino-acid sequence, 76 residues long: uncharacterized protein (76 aa).

This is an uncharacterized protein from Treponema pallidum (strain Nichols).